A 155-amino-acid chain; its full sequence is Microsomal glutathione S-transferase 1 (155 aa).

The Lumenal portion of the chain corresponds to 3–9 (DLTELMK). The chain crosses the membrane as a helical span at residues 10-33 (NEVFMAFASYATIVLSKMMFMSTA). Residues 34-62 (TAFYRLTRKVFANPEDCSSFGKGENAKKY) lie on the Cytoplasmic side of the membrane. Arg-38 is a binding site for glutathione. N6-acetyllysine occurs at positions 42, 55, and 60. A helical membrane pass occupies residues 63–96 (LRTDERVERVRRAHLNDLENIVPFLGIGLLYSLS). Arg-73, Arg-74, His-76, and Glu-81 together coordinate glutathione. Residues 97 to 99 (GPD) lie on the Lumenal side of the membrane. The chain crosses the membrane as a helical span at residues 100 to 123 (LSTAILHFRLFVGARIYHTIAYLT). Tyr-121 contacts glutathione. At 124–128 (PLPQP) the chain is on the cytoplasmic side. The chain crosses the membrane as a helical span at residues 129 to 148 (NRGLAFFLGYGVTLSMAYRL). The Lumenal segment spans residues 149-155 (LKSRLYL).

Belongs to the MAPEG family. As to quaternary structure, homotrimer; The trimer binds only one molecule of glutathione.

The protein resides in the endoplasmic reticulum membrane. It is found in the mitochondrion outer membrane. The enzyme catalyses RX + glutathione = an S-substituted glutathione + a halide anion + H(+). Conjugation of reduced glutathione to a wide number of exogenous and endogenous hydrophobic electrophiles. The chain is Microsomal glutathione S-transferase 1 (MGST1) from Sus scrofa (Pig).